The sequence spans 485 residues: Sphingosine kinase 1 (485 aa).

In terms of domain architecture, DAGKc spans 116–258; the sequence is GRPKKLLVFV…LDVATISQGT (143 aa). ATP contacts are provided by residues 126-128 and Thr-158; that span reads NPF. Residue 183–186 participates in substrate binding; sequence SGDG. Asp-185 serves as the catalytic Proton donor/acceptor. ATP is bound by residues Glu-190 and 215–217; that span reads GSG. Asp-276 provides a ligand contact to substrate. Residues Arg-283, Arg-289, and 446–448 contribute to the ATP site; that span reads DGE.

Requires Mg(2+) as cofactor. Highly expressed in stems and flowers and at lower levels in roots, leaves and siliques.

Its subcellular location is the vacuole membrane. It carries out the reaction a sphingoid base + ATP = a sphingoid 1-phosphate + ADP + H(+). With respect to regulation, activated by phosphatidic acid (PA). Binding with PA stimulates the activity by promoting the binding of substrate to the catalytic site. Functionally, involved in the production of sphingolipid metabolites. Phosphorylates sphingosine and various sphingoid long-chain base (LCB) products, such as phytosphingosine (PHS, 4-hydroxysphinganine), 4-hydroxy-8-sphingenine, 4,8-sphingadienine, D-erythro-dihydrosphingosine and D,L-threo-dihydrosphingosine. Is required for abscisic acid (ABA) signaling that mediates stomatal closure, inhibition of seed germination and root elongation. May function upstream of PLDALPHA1 and phosphatidic acid (PA) in an amplification response to ABA that mediates stomatal closure. The chain is Sphingosine kinase 1 (SPHK1) from Arabidopsis thaliana (Mouse-ear cress).